The following is a 38-amino-acid chain: Large ribosomal subunit protein bL36 (38 aa).

It belongs to the bacterial ribosomal protein bL36 family.

The polypeptide is Large ribosomal subunit protein bL36 (Chloroflexus aurantiacus (strain ATCC 29366 / DSM 635 / J-10-fl)).